The chain runs to 335 residues: Anthranilate phosphoribosyltransferase (335 aa).

5-phospho-alpha-D-ribose 1-diphosphate is bound by residues G79, 82–83 (GD), S87, 89–92 (NIST), 107–115 (KHGNRSITS), and S119. G79 provides a ligand contact to anthranilate. A Mg(2+)-binding site is contributed by S91. N110 provides a ligand contact to anthranilate. R165 is an anthranilate binding site. Mg(2+) is bound by residues D224 and E225.

Belongs to the anthranilate phosphoribosyltransferase family. As to quaternary structure, homodimer. Mg(2+) serves as cofactor.

It catalyses the reaction N-(5-phospho-beta-D-ribosyl)anthranilate + diphosphate = 5-phospho-alpha-D-ribose 1-diphosphate + anthranilate. The protein operates within amino-acid biosynthesis; L-tryptophan biosynthesis; L-tryptophan from chorismate: step 2/5. Catalyzes the transfer of the phosphoribosyl group of 5-phosphorylribose-1-pyrophosphate (PRPP) to anthranilate to yield N-(5'-phosphoribosyl)-anthranilate (PRA). This Lactococcus lactis subsp. cremoris (strain SK11) protein is Anthranilate phosphoribosyltransferase.